Here is a 503-residue protein sequence, read N- to C-terminus: MTDKKYIIALDQGTTSSRAVLLDHNANVVEIAQREFTQIYPRAGWVEHNPMEIWATQSSTLNEVVAKAGITSDEIAAIGITNQRETTIVWEKSTGTPVYNAIVWQCRRTADITDKLKADGHEEYIRNTTGLVVDPYFSGTKVKWILDNVEGAREKAERGELLFGTVDTWLVWKLTQGRVHVTDYTNASRTMLFNIHTKQWDDKMLEILNIPRSILPEVRNSSEIYGQTNIGGKGGVRIPVAGIAGDQQAALYGHLCVHAGQAKNTYGTGCFMLLHTGNKAITSKNGLLTTIACNAKGEPEYALEGSVFIAGASIQWLRDELKTVHDSFDSEYFAQKVTDSNGVYVVPAFTGLGAPYWDPYARGAIFGLSRGANCNHIVRATLQSIAYQTRDVLEAMQSDSGERLQYLRVDGGATNNNFLMQFQADILDVNVERPVVKEVTALGAAYLAGLATGFWKDLDELRDKARVERTFSPDSDNEKRERRYKGWKKAVKRSLEWAKEDEE.

Residue Thr14 coordinates ADP. Positions 14, 15, and 16 each coordinate ATP. Thr14 is a binding site for sn-glycerol 3-phosphate. Residue Arg18 coordinates ADP. Residues Arg84, Glu85, Tyr136, and Asp246 each coordinate sn-glycerol 3-phosphate. Glycerol is bound by residues Arg84, Glu85, Tyr136, Asp246, and Gln247. Residues Thr268 and Gly311 each contribute to the ADP site. ATP contacts are provided by Thr268, Gly311, Gln315, and Gly412. Positions 412 and 416 each coordinate ADP.

This sequence belongs to the FGGY kinase family.

The catalysed reaction is glycerol + ATP = sn-glycerol 3-phosphate + ADP + H(+). It participates in polyol metabolism; glycerol degradation via glycerol kinase pathway; sn-glycerol 3-phosphate from glycerol: step 1/1. Inhibited by fructose 1,6-bisphosphate (FBP). Key enzyme in the regulation of glycerol uptake and metabolism. Catalyzes the phosphorylation of glycerol to yield sn-glycerol 3-phosphate. This chain is Glycerol kinase, found in Haemophilus influenzae (strain 86-028NP).